We begin with the raw amino-acid sequence, 285 residues long: Type II secretion system protein C (285 aa).

The Cytoplasmic segment spans residues 1-27 (MARLQAFKDPSFHSLVATFRSLPLIRR). The chain crosses the membrane as a helical span at residues 28–48 (FVLGLILLLICQQLAVLTWRF). At 49-285 (LLPEDSRIVG…DIYLALDGDH (237 aa)) the chain is on the periplasmic side.

It belongs to the GSP C family.

Its subcellular location is the cell inner membrane. Its function is as follows. Involved in a type II secretion system (T2SS, formerly general secretion pathway, GSP) for the export of proteins. Required for the translocation of the multiple pectic enzymes. This is Type II secretion system protein C (outC) from Pectobacterium carotovorum subsp. carotovorum (Erwinia carotovora subsp. carotovora).